A 254-amino-acid polypeptide reads, in one-letter code: Phytolongin Phyl1.1 (254 aa).

Residues 12–113 (CVSRDNQILY…TAMIGSINVE (102 aa)) form the Longin domain. Residues 138-173 (ELKSSNLGEQSEGSNSTKAPLLGRLSKQEKKKGKDH) are disordered. A compositionally biased stretch (polar residues) spans 145–155 (GEQSEGSNSTK). The chain crosses the membrane as a helical; Anchor for type IV membrane protein span at residues 226 to 246 (IVLAIDAAICLTLFGIWLAIC).

It belongs to the synaptobrevin family.

It localises to the membrane. Its function is as follows. Non-SNARE longin protein involved in membrane-trafficking machinery. This Arabidopsis thaliana (Mouse-ear cress) protein is Phytolongin Phyl1.1.